A 138-amino-acid chain; its full sequence is Small ribosomal subunit protein uS11c (138 aa).

A disordered region spans residues 1–23; it reads MAKPIPRIGSRKNGRIGSRKSGR. A compositionally biased stretch (basic residues) spans 9–23; sequence GSRKNGRIGSRKSGR.

The protein belongs to the universal ribosomal protein uS11 family. Part of the 30S ribosomal subunit.

Its subcellular location is the plastid. It is found in the chloroplast. In Buxus microphylla (Littleleaf boxwood), this protein is Small ribosomal subunit protein uS11c.